Here is a 41-residue protein sequence, read N- to C-terminus: Omega-theraphotoxin-Hg1a (41 aa).

Disulfide bonds link Cys7-Cys21, Cys14-Cys26, and Cys20-Cys33.

This sequence belongs to the neurotoxin 10 (Hwtx-1) family. 56 (SNX-482) subfamily. As to expression, expressed by the venom gland.

It localises to the secreted. Its function is as follows. Toxin that blocks vertebrate P/Q-type (Cav2.1/CACNA1A) and R-type (Cav2.3/CACNA1E) voltage-gated calcium channels. Also inhibits sodium channels (Nav) in bovine chromaffin cells by delaying sodium channel inactivation. In Hysterocrates gigas (Cameroon red baboon tarantula), this protein is Omega-theraphotoxin-Hg1a.